Reading from the N-terminus, the 134-residue chain is Large ribosomal subunit protein bL20 (134 aa).

It belongs to the bacterial ribosomal protein bL20 family.

Binds directly to 23S ribosomal RNA and is necessary for the in vitro assembly process of the 50S ribosomal subunit. It is not involved in the protein synthesizing functions of that subunit. The chain is Large ribosomal subunit protein bL20 from Brucella abortus (strain S19).